The following is a 375-amino-acid chain: Xylose transport system permease protein XylH (375 aa).

Helical transmembrane passes span 9–29, 52–72, 85–105, 118–138, 159–179, 199–219, 220–240, 271–291, 319–339, and 348–368; these read LQVY…SVAT, LAIG…VGSL, VWWG…GLIF, VPSF…LIGL, LSDI…VLWG, DFTK…LLND, YRGI…GLFL, KLII…ILSA, LAGG…IASL, and VPTF…VWID.

This sequence belongs to the binding-protein-dependent transport system permease family. AraH/RbsC subfamily.

The protein localises to the cell inner membrane. Part of the binding-protein-dependent transport system for D-xylose. Probably responsible for the translocation of the substrate across the membrane. The chain is Xylose transport system permease protein XylH (xylH) from Haemophilus influenzae (strain ATCC 51907 / DSM 11121 / KW20 / Rd).